The sequence spans 208 residues: Pyrophosphate-energized proton pump 2 (208 aa).

Transmembrane regions (helical) follow at residues 19–39 (AYPL…TFFV), 54–74 (GLIV…SFTI), 89–109 (GGNL…IVVI), 140–160 (LAVS…GIIA), and 167–187 (LFGT…IVAL).

Belongs to the H(+)-translocating pyrophosphatase (TC 3.A.10) family. As to quaternary structure, homodimer. Mg(2+) serves as cofactor.

The protein localises to the cell inner membrane. It catalyses the reaction diphosphate + H2O + H(+)(in) = 2 phosphate + 2 H(+)(out). Its function is as follows. Proton pump that utilizes the energy of pyrophosphate hydrolysis as the driving force for proton movement across the membrane. Generates a proton motive force. The chain is Pyrophosphate-energized proton pump 2 (hppA2) from Mycoplana dimorpha.